The following is a 471-amino-acid chain: 6-phosphofructo-2-kinase/fructose-2,6-bisphosphatase 1 (471 aa).

An N-acetylserine modification is found at Ser2. The interval Ser2–Thr250 is 6-phosphofructo-2-kinase. Ser33 bears the Phosphoserine; by PKA mark. ATP is bound at residue Gly49–Tyr57. Residues Arg82 and Arg105 each contribute to the beta-D-fructose 6-phosphate site. Asp131 is an active-site residue. Residues Thr133 and Arg139 each coordinate beta-D-fructose 6-phosphate. Position 141 is a phosphoserine (Ser141). Residue Cys161 is part of the active site. Residue Asn170–Lys175 participates in ATP binding. Beta-D-fructose 6-phosphate-binding residues include Lys175, Arg196, and Tyr200. The interval Pro251–Tyr471 is fructose-2,6-bisphosphatase. A beta-D-fructose 2,6-bisphosphate-binding site is contributed by Arg258. The Tele-phosphohistidine intermediate role is filled by His259. 3 residues coordinate beta-D-fructose 2,6-bisphosphate: Asn265, Gly271, and Arg308. The Proton donor/acceptor role is filled by Glu328. Residues Tyr339, Arg353, Lys357, Tyr368, Gln394, and Arg398 each coordinate beta-D-fructose 2,6-bisphosphate. Residue Phe350–Arg353 participates in ATP binding. Residues Gln394–Arg398 and Tyr430 contribute to the ATP site.

It in the C-terminal section; belongs to the phosphoglycerate mutase family. Homodimer. Liver.

The enzyme catalyses beta-D-fructose 2,6-bisphosphate + H2O = beta-D-fructose 6-phosphate + phosphate. The catalysed reaction is beta-D-fructose 6-phosphate + ATP = beta-D-fructose 2,6-bisphosphate + ADP + H(+). Phosphorylation at Ser-33 inhibits the kinase and activates the bisphosphatase. Functionally, synthesis and degradation of fructose 2,6-bisphosphate. This is 6-phosphofructo-2-kinase/fructose-2,6-bisphosphatase 1 from Homo sapiens (Human).